A 462-amino-acid chain; its full sequence is Tubulin alpha-4 chain (462 aa).

GTP contacts are provided by Q11, E82, S151, G155, T156, T190, N217, and N239. Residue E82 participates in Mg(2+) binding. E265 is a catalytic residue.

The protein belongs to the tubulin family. Dimer of alpha and beta chains. A typical microtubule is a hollow water-filled tube with an outer diameter of 25 nm and an inner diameter of 15 nM. Alpha-beta heterodimers associate head-to-tail to form protofilaments running lengthwise along the microtubule wall with the beta-tubulin subunit facing the microtubule plus end conferring a structural polarity. Microtubules usually have 13 protofilaments but different protofilament numbers can be found in some organisms and specialized cells. It depends on Mg(2+) as a cofactor.

It localises to the cytoplasm. The protein resides in the cytoskeleton. The catalysed reaction is GTP + H2O = GDP + phosphate + H(+). Functionally, tubulin is the major constituent of microtubules, a cylinder consisting of laterally associated linear protofilaments composed of alpha- and beta-tubulin heterodimers. Microtubules grow by the addition of GTP-tubulin dimers to the microtubule end, where a stabilizing cap forms. Below the cap, tubulin dimers are in GDP-bound state, owing to GTPase activity of alpha-tubulin. In Drosophila melanogaster (Fruit fly), this protein is Tubulin alpha-4 chain (alphaTub67C).